The chain runs to 229 residues: 7-cyano-7-deazaguanine synthase (229 aa).

Residue 8-18 (FSGGQDSTTCL) participates in ATP binding. The Zn(2+) site is built by cysteine 187, cysteine 196, cysteine 199, and cysteine 202.

Belongs to the QueC family. Zn(2+) serves as cofactor.

It catalyses the reaction 7-carboxy-7-deazaguanine + NH4(+) + ATP = 7-cyano-7-deazaguanine + ADP + phosphate + H2O + H(+). The protein operates within purine metabolism; 7-cyano-7-deazaguanine biosynthesis. Catalyzes the ATP-dependent conversion of 7-carboxy-7-deazaguanine (CDG) to 7-cyano-7-deazaguanine (preQ(0)). This Shewanella halifaxensis (strain HAW-EB4) protein is 7-cyano-7-deazaguanine synthase.